Here is a 2542-residue protein sequence, read N- to C-terminus: Talin-2 (2542 aa).

An FERM domain is found at 88–406 (RPQKIRMLDG…GYIDIILKKK (319 aa)). The interval 312 to 406 (GVSFFLVKEK…GYIDIILKKK (95 aa)) is interaction with PIP5K1C. Serine 428, serine 449, serine 623, and serine 1023 each carry phosphoserine. The residue at position 1665 (tyrosine 1665) is a Phosphotyrosine. Threonine 1843 bears the Phosphothreonine mark. In terms of domain architecture, I/LWEQ spans 2294-2533 (TEWVDPEDPT…QIRQQQYKFL (240 aa)).

As to quaternary structure, interacts directly with PIP5K1C.

The protein resides in the cytoplasm. Its subcellular location is the cell junction. It is found in the focal adhesion. The protein localises to the synapse. It localises to the cell membrane. The protein resides in the cytoskeleton. Functionally, as a major component of focal adhesion plaques that links integrin to the actin cytoskeleton, may play an important role in cell adhesion. Recruits PIP5K1C to focal adhesion plaques and strongly activates its kinase activity. In Homo sapiens (Human), this protein is Talin-2 (TLN2).